The chain runs to 496 residues: Zinc finger and SCAN domain-containing protein 5C (496 aa).

Residues 1–19 (MAANCTSSWSLGESCNSPG) show a composition bias toward polar residues. The interval 1 to 38 (MAANCTSSWSLGESCNSPGSEPPQSMPSPATQLGNHDS) is disordered. An SCAN box domain is found at 44–126 (HVNFRMFSCP…DLLRNNRRPK (83 aa)). Disordered stretches follow at residues 149-188 (EAPA…TLPR) and 203-347 (PETT…HPSG). The segment covering 161 to 171 (VSSQRTSSVNQ) has biased composition (polar residues). The span at 210 to 223 (GDPKALRPKPTLEK) shows a compositional bias: basic and acidic residues. Residues 234–247 (GLTSPEPQLPNSPT) are compositionally biased toward polar residues. Residues 253 to 263 (KEGKEPQKRAS) are compositionally biased toward basic and acidic residues. 5 consecutive C2H2-type zinc fingers follow at residues 356-378 (FACE…TRSH), 384-406 (FQCN…QRTH), 412-434 (YTCD…KRSH), 440-462 (FECK…QRIH), and 468-490 (HKCS…QKTH).

The protein resides in the nucleus. Functionally, may be involved in transcriptional regulation. The polypeptide is Zinc finger and SCAN domain-containing protein 5C (Homo sapiens (Human)).